We begin with the raw amino-acid sequence, 352 residues long: Holliday junction branch migration complex subunit RuvB (352 aa).

Residues 1 to 26 (MIETDKLRAAAPERLISPQPADRQED) are disordered. Residues 4–193 (TDKLRAAAPE…FGIVSRLEFY (190 aa)) form a large ATPase domain (RuvB-L) region. Residues leucine 32, arginine 33, glycine 74, lysine 77, threonine 78, threonine 79, 140–142 (EDF), arginine 183, tyrosine 193, and arginine 230 each bind ATP. Residue threonine 78 participates in Mg(2+) binding. The tract at residues 194-264 (TPDELGFIVS…VADAALRMLD (71 aa)) is small ATPAse domain (RuvB-S). Residues 267 to 352 (SLGLDLMDRK…RPGGTDLFGG (86 aa)) are head domain (RuvB-H). Arginine 322 and arginine 327 together coordinate DNA.

It belongs to the RuvB family. As to quaternary structure, homohexamer. Forms an RuvA(8)-RuvB(12)-Holliday junction (HJ) complex. HJ DNA is sandwiched between 2 RuvA tetramers; dsDNA enters through RuvA and exits via RuvB. An RuvB hexamer assembles on each DNA strand where it exits the tetramer. Each RuvB hexamer is contacted by two RuvA subunits (via domain III) on 2 adjacent RuvB subunits; this complex drives branch migration. In the full resolvosome a probable DNA-RuvA(4)-RuvB(12)-RuvC(2) complex forms which resolves the HJ.

It is found in the cytoplasm. It carries out the reaction ATP + H2O = ADP + phosphate + H(+). Its function is as follows. The RuvA-RuvB-RuvC complex processes Holliday junction (HJ) DNA during genetic recombination and DNA repair, while the RuvA-RuvB complex plays an important role in the rescue of blocked DNA replication forks via replication fork reversal (RFR). RuvA specifically binds to HJ cruciform DNA, conferring on it an open structure. The RuvB hexamer acts as an ATP-dependent pump, pulling dsDNA into and through the RuvAB complex. RuvB forms 2 homohexamers on either side of HJ DNA bound by 1 or 2 RuvA tetramers; 4 subunits per hexamer contact DNA at a time. Coordinated motions by a converter formed by DNA-disengaged RuvB subunits stimulates ATP hydrolysis and nucleotide exchange. Immobilization of the converter enables RuvB to convert the ATP-contained energy into a lever motion, pulling 2 nucleotides of DNA out of the RuvA tetramer per ATP hydrolyzed, thus driving DNA branch migration. The RuvB motors rotate together with the DNA substrate, which together with the progressing nucleotide cycle form the mechanistic basis for DNA recombination by continuous HJ branch migration. Branch migration allows RuvC to scan DNA until it finds its consensus sequence, where it cleaves and resolves cruciform DNA. This Azoarcus sp. (strain BH72) protein is Holliday junction branch migration complex subunit RuvB.